A 301-amino-acid polypeptide reads, in one-letter code: Phosphate butyryltransferase (301 aa).

It belongs to the phosphate acetyltransferase and butyryltransferase family.

The catalysed reaction is butanoyl-CoA + phosphate = butanoyl phosphate + CoA. Its pathway is lipid metabolism; butanoate metabolism. In terms of biological role, catalyzes the conversion of butyryl-CoA through butyryl phosphate to butyrate. The sequence is that of Phosphate butyryltransferase (ptb) from Clostridium acetobutylicum (strain ATCC 824 / DSM 792 / JCM 1419 / IAM 19013 / LMG 5710 / NBRC 13948 / NRRL B-527 / VKM B-1787 / 2291 / W).